Here is an 810-residue protein sequence, read N- to C-terminus: Actin-regulating kinase PRK1 (810 aa).

A Protein kinase domain is found at 22-298 (AKIIKYLTSG…CQVLEEVSRL (277 aa)). ATP-binding positions include 28–36 (LTSGGFAQV) and lysine 56. The active-site Proton acceptor is aspartate 158. A phosphoserine mark is found at serine 402, serine 428, and serine 484. Disordered stretches follow at residues 552 to 668 (FTGN…NVNI) and 733 to 761 (GVLD…HLRT). At threonine 553 the chain carries Phosphothreonine. Residues 553 to 566 (TGNSVNNSRSASFD) show a composition bias toward polar residues. Serine 556 carries the post-translational modification Phosphoserine. Positions 567–588 (NNNVNGNGNNTNRRLVSSSTSS) are enriched in low complexity. 2 stretches are compositionally biased toward basic and acidic residues: residues 594–612 (SDTK…EKRR) and 622–639 (FDQH…DYYR). A compositionally biased stretch (low complexity) spans 645–658 (KKTQASAKTTSKPT). Residues 733–748 (GVLDIKTKSNGKDKSR) show a composition bias toward basic and acidic residues. The tract at residues 743–756 (GKDKSRPPRPPPKP) is interaction with SH3 domain of ABP1.

This sequence belongs to the protein kinase superfamily. Ser/Thr protein kinase family. As to quaternary structure, interacts with ABP1, which is required for proper actin patch localization.

Its subcellular location is the cytoplasm. It localises to the cytoskeleton. The protein localises to the actin patch. It carries out the reaction L-seryl-[protein] + ATP = O-phospho-L-seryl-[protein] + ADP + H(+). The catalysed reaction is L-threonyl-[protein] + ATP = O-phospho-L-threonyl-[protein] + ADP + H(+). In terms of biological role, protein kinase involved in the regulation of actin cytoskeleton organization and endocytosis. Phosphorylates PAN1 which disrupts the interaction between PAN1 and END3, and between PAN1 and SLA1. Phosphorylates SCD5. Preferentially, phosphorylates substrates on threonine residues in a [L/I/V/M]-x-x-[Q/N/T/S]-x-T-G motif. In Saccharomyces cerevisiae (strain ATCC 204508 / S288c) (Baker's yeast), this protein is Actin-regulating kinase PRK1 (PRK1).